Reading from the N-terminus, the 123-residue chain is Immunoglobulin lambda variable 9-49 (123 aa).

An N-terminal signal peptide occupies residues 1 to 19 (MAWAPLLLTLLSLLTGSLS). The tract at residues 20 to 44 (QPVLTQPPSASASLGASVTLTCTLS) is framework-1. The region spanning 21–123 (PVLTQPPSAS…ADHGSGSNFV (103 aa)) is the Ig-like domain. Residues Cys41 and Cys112 are joined by a disulfide bond. A complementarity-determining-1 region spans residues 45 to 51 (SGYSNYK). The segment at 52–68 (VDWYQQRPGKGPRFVMR) is framework-2. Residues 69 to 76 (VGTGGIVG) are complementarity-determining-2. The tract at residues 77 to 112 (SKGDGIPDRFSVLGSGLNRYLTIKNIQEEDESDYHC) is framework-3. At Tyr96 the chain carries Phosphotyrosine. A Phosphothreonine modification is found at Thr98. A complementarity-determining-3 region spans residues 113–123 (GADHGSGSNFV).

Immunoglobulins are composed of two identical heavy chains and two identical light chains; disulfide-linked.

The protein localises to the secreted. It localises to the cell membrane. Functionally, v region of the variable domain of immunoglobulin light chains that participates in the antigen recognition. Immunoglobulins, also known as antibodies, are membrane-bound or secreted glycoproteins produced by B lymphocytes. In the recognition phase of humoral immunity, the membrane-bound immunoglobulins serve as receptors which, upon binding of a specific antigen, trigger the clonal expansion and differentiation of B lymphocytes into immunoglobulins-secreting plasma cells. Secreted immunoglobulins mediate the effector phase of humoral immunity, which results in the elimination of bound antigens. The antigen binding site is formed by the variable domain of one heavy chain, together with that of its associated light chain. Thus, each immunoglobulin has two antigen binding sites with remarkable affinity for a particular antigen. The variable domains are assembled by a process called V-(D)-J rearrangement and can then be subjected to somatic hypermutations which, after exposure to antigen and selection, allow affinity maturation for a particular antigen. The protein is Immunoglobulin lambda variable 9-49 of Homo sapiens (Human).